The primary structure comprises 225 residues: Thylakoid lumenal 17.9 kDa protein, chloroplastic (225 aa).

Its subcellular location is the plastid. The protein resides in the chloroplast thylakoid lumen. This chain is Thylakoid lumenal 17.9 kDa protein, chloroplastic, found in Arabidopsis thaliana (Mouse-ear cress).